We begin with the raw amino-acid sequence, 841 residues long: Protein translocase subunit SecA (841 aa).

Residues glutamine 85, 103–107, and aspartate 492 contribute to the ATP site; that span reads GEGKT. The segment at 786–812 is disordered; the sequence is REEVVQGQTTAHQPQDGDEAKQAKKAP. Zn(2+) is bound by residues cysteine 825, cysteine 827, cysteine 836, and cysteine 837.

This sequence belongs to the SecA family. As to quaternary structure, monomer and homodimer. Part of the essential Sec protein translocation apparatus which comprises SecA, SecYEG and auxiliary proteins SecDF. Other proteins may also be involved. It depends on Zn(2+) as a cofactor.

It is found in the cell membrane. The protein resides in the cytoplasm. It catalyses the reaction ATP + H2O + cellular proteinSide 1 = ADP + phosphate + cellular proteinSide 2.. Functionally, part of the Sec protein translocase complex. Interacts with the SecYEG preprotein conducting channel. Has a central role in coupling the hydrolysis of ATP to the transfer of proteins into and across the cell membrane, serving as an ATP-driven molecular motor driving the stepwise translocation of polypeptide chains across the membrane. The protein is Protein translocase subunit SecA of Bacillus velezensis (strain DSM 23117 / BGSC 10A6 / LMG 26770 / FZB42) (Bacillus amyloliquefaciens subsp. plantarum).